A 370-amino-acid chain; its full sequence is 3-isopropylmalate dehydrogenase (370 aa).

G77–E90 is an NAD(+) binding site. Substrate contacts are provided by R97, R107, R135, and D226. Mg(2+) is bound by residues D226, D250, and D254. Position 290-302 (G290–N302) interacts with NAD(+).

It belongs to the isocitrate and isopropylmalate dehydrogenases family. LeuB type 1 subfamily. In terms of assembly, homodimer. Mg(2+) is required as a cofactor. It depends on Mn(2+) as a cofactor.

The protein resides in the cytoplasm. It carries out the reaction (2R,3S)-3-isopropylmalate + NAD(+) = 4-methyl-2-oxopentanoate + CO2 + NADH. It participates in amino-acid biosynthesis; L-leucine biosynthesis; L-leucine from 3-methyl-2-oxobutanoate: step 3/4. In terms of biological role, catalyzes the oxidation of 3-carboxy-2-hydroxy-4-methylpentanoate (3-isopropylmalate) to 3-carboxy-4-methyl-2-oxopentanoate. The product decarboxylates to 4-methyl-2 oxopentanoate. The protein is 3-isopropylmalate dehydrogenase of Rhizobium johnstonii (strain DSM 114642 / LMG 32736 / 3841) (Rhizobium leguminosarum bv. viciae).